Here is a 176-residue protein sequence, read N- to C-terminus: Peptide methionine sulfoxide reductase MsrA (176 aa).

Residue C10 is part of the active site.

It belongs to the MsrA Met sulfoxide reductase family.

The catalysed reaction is L-methionyl-[protein] + [thioredoxin]-disulfide + H2O = L-methionyl-(S)-S-oxide-[protein] + [thioredoxin]-dithiol. It catalyses the reaction [thioredoxin]-disulfide + L-methionine + H2O = L-methionine (S)-S-oxide + [thioredoxin]-dithiol. Its function is as follows. Has an important function as a repair enzyme for proteins that have been inactivated by oxidation. Catalyzes the reversible oxidation-reduction of methionine sulfoxide in proteins to methionine. This is Peptide methionine sulfoxide reductase MsrA from Chromobacterium violaceum (strain ATCC 12472 / DSM 30191 / JCM 1249 / CCUG 213 / NBRC 12614 / NCIMB 9131 / NCTC 9757 / MK).